The primary structure comprises 141 residues: Putative antiporter subunit mnhB2 (141 aa).

Transmembrane regions (helical) follow at residues 10 to 30, 35 to 55, 70 to 90, and 114 to 134; these read TVTK…FFAG, GGGF…FLAF, ILMI…MFFG, and ITLF…TVML.

The protein belongs to the CPA3 antiporters (TC 2.A.63) subunit B family. In terms of assembly, may form a heterooligomeric complex that consists of seven subunits: mnhA2, mnhB2, mnhC2, mnhD2, mnhE2, mnhF2 and mnhG2.

The protein resides in the cell membrane. In Staphylococcus aureus (strain Mu3 / ATCC 700698), this protein is Putative antiporter subunit mnhB2 (mnhB2).